A 300-amino-acid polypeptide reads, in one-letter code: Movement protein (300 aa).

The protein belongs to the alfamovirus movement protein family.

It localises to the host cell junction. The protein resides in the host plasmodesma. Its function is as follows. Transports viral genome to neighboring plant cells directly through plasmosdesmata, without any budding. The movement protein allows efficient cell to cell propagation, by bypassing the host cell wall barrier. Acts by forming a tubular structure at the host plasmodesmata, enlarging it enough to allow free passage of virion capsids. The protein is Movement protein of Alfalfa mosaic virus (AMV).